Consider the following 111-residue polypeptide: Nucleoid-associated protein PputW619_3586 (111 aa).

The disordered stretch occupies residues 87–111 (EQSSQEKMGGMTAGMQLPPGFKMPF).

The protein belongs to the YbaB/EbfC family. Homodimer.

The protein localises to the cytoplasm. It is found in the nucleoid. Functionally, binds to DNA and alters its conformation. May be involved in regulation of gene expression, nucleoid organization and DNA protection. In Pseudomonas putida (strain W619), this protein is Nucleoid-associated protein PputW619_3586.